Reading from the N-terminus, the 284-residue chain is 2-dehydro-3-deoxyphosphooctonate aldolase (284 aa).

This sequence belongs to the KdsA family.

The protein localises to the cytoplasm. The catalysed reaction is D-arabinose 5-phosphate + phosphoenolpyruvate + H2O = 3-deoxy-alpha-D-manno-2-octulosonate-8-phosphate + phosphate. Its pathway is carbohydrate biosynthesis; 3-deoxy-D-manno-octulosonate biosynthesis; 3-deoxy-D-manno-octulosonate from D-ribulose 5-phosphate: step 2/3. It participates in bacterial outer membrane biogenesis; lipopolysaccharide biosynthesis. The protein is 2-dehydro-3-deoxyphosphooctonate aldolase of Escherichia coli O6:H1 (strain CFT073 / ATCC 700928 / UPEC).